The chain runs to 200 residues: ATP-dependent Clp protease proteolytic subunit 3 (200 aa).

S101 serves as the catalytic Nucleophile. Residue H126 is part of the active site.

It belongs to the peptidase S14 family. As to quaternary structure, fourteen ClpP subunits assemble into 2 heptameric rings which stack back to back to give a disk-like structure with a central cavity, resembling the structure of eukaryotic proteasomes.

Its subcellular location is the cytoplasm. It catalyses the reaction Hydrolysis of proteins to small peptides in the presence of ATP and magnesium. alpha-casein is the usual test substrate. In the absence of ATP, only oligopeptides shorter than five residues are hydrolyzed (such as succinyl-Leu-Tyr-|-NHMec, and Leu-Tyr-Leu-|-Tyr-Trp, in which cleavage of the -Tyr-|-Leu- and -Tyr-|-Trp bonds also occurs).. Its function is as follows. Cleaves peptides in various proteins in a process that requires ATP hydrolysis. Has a chymotrypsin-like activity. Plays a major role in the degradation of misfolded proteins. The polypeptide is ATP-dependent Clp protease proteolytic subunit 3 (Parasynechococcus marenigrum (strain WH8102)).